The following is a 406-amino-acid chain: MSLLDTLQRGLADLDAQGLRRVRRIADTACDARMIVNRREIVGFASNDYLGLAAHPALVAAFAEGAQRYGAGSGGSHLLGGHSRAHARLEDELAGFAGGFSDAPRALYFSTGYMANLAAMTALAGKGATIFSDALNHASLIDGMRLSRANVQVYPHADTAALAALLDASEAETKLIVSDTVFSMDGDIAPLAELVALAERHGAWLVIDDAHGFGVLGPQGRGALAAAALRSPHLVYVGTLGKAAGVAGAFVIAHETVIEWLIQRARSYIFTTAAPPAVAHAVSASLKVIAGDEGDARRAHLAALIERTRALLRNTRWQPVDSHTAVQPLVIGSNDATLAAMRALDAHGLWVPAIRPPTVPAGTSRLRVSLSAAHSFDDLARLEAALIEASEAAAASVGAARQEAAA.

Arg-21 contacts substrate. 112 to 113 is a pyridoxal 5'-phosphate binding site; it reads GY. Position 137 (His-137) interacts with substrate. 3 residues coordinate pyridoxal 5'-phosphate: Ser-183, His-211, and Thr-239. Lys-242 carries the post-translational modification N6-(pyridoxal phosphate)lysine. Thr-358 lines the substrate pocket.

The protein belongs to the class-II pyridoxal-phosphate-dependent aminotransferase family. BioF subfamily. Homodimer. Requires pyridoxal 5'-phosphate as cofactor.

The enzyme catalyses 6-carboxyhexanoyl-[ACP] + L-alanine + H(+) = (8S)-8-amino-7-oxononanoate + holo-[ACP] + CO2. Its pathway is cofactor biosynthesis; biotin biosynthesis. Functionally, catalyzes the decarboxylative condensation of pimeloyl-[acyl-carrier protein] and L-alanine to produce 8-amino-7-oxononanoate (AON), [acyl-carrier protein], and carbon dioxide. This is 8-amino-7-oxononanoate synthase from Burkholderia cenocepacia (strain HI2424).